Here is a 190-residue protein sequence, read N- to C-terminus: GMP synthase [glutamine-hydrolyzing] subunit A (190 aa).

One can recognise a Glutamine amidotransferase type-1 domain in the interval 2–189 (TILVINNKGQ…YEICKKRCNN (188 aa)). C76 functions as the Nucleophile in the catalytic mechanism. Catalysis depends on residues H163 and E165.

As to quaternary structure, heterodimer composed of a glutamine amidotransferase subunit (A) and a GMP-binding subunit (B).

The enzyme catalyses XMP + L-glutamine + ATP + H2O = GMP + L-glutamate + AMP + diphosphate + 2 H(+). Its pathway is purine metabolism; GMP biosynthesis; GMP from XMP (L-Gln route): step 1/1. In terms of biological role, catalyzes the synthesis of GMP from XMP. This chain is GMP synthase [glutamine-hydrolyzing] subunit A, found in Methanobrevibacter smithii (strain ATCC 35061 / DSM 861 / OCM 144 / PS).